The chain runs to 468 residues: MAARLVSRCGAVRAAPHSGPLVSWRRWSGASTDTVYDVVVSGGGLVGAAMACALGYDIHFHDKKILLLEAGPKKVLEKLSETYSNRVSSISPGSATLLSSFGAWDHICNMRYRAFRRMQVWDACSEALIMFDKDNLDDMGYIVENDVIMHALTKQLEAVSDRVTVLYRSKAIRYTWPCPFPMADSSPWVHITLGDGSTFQTKLLIGADGHNSGVRQAVGIQNVSWNYDQSAVVATLHLSEATENNVAWQRFLPSGPIALLPLSDTLSSLVWSTSHEHAAELVSMDEEKFVDAVNSAFWSDADHTDFIDTAGAMLQYAVSLLKPTKVSARQLPPSVARVDAKSRVLFPLGLGHAAEYVRPRVALIGDAAHRVHPLAGQGVNMGFGDISSLAHHLSTAAFNGKDLGSVSHLTGYETERQRHNTALLAATDLLKRLYSTSASPLVLLRTWGLQATNAVSPLKEQIMAFASK.

The transit peptide at Met1–Ser28 directs the protein to the mitochondrion.

This sequence belongs to the UbiH/COQ6 family. Component of a multi-subunit COQ enzyme complex, composed of at least COQ3, COQ4, COQ5, COQ6, COQ7 and COQ9. Interacts with COQ8B and COQ7. Requires FAD as cofactor. In terms of tissue distribution, widely expressed.

Its subcellular location is the mitochondrion inner membrane. It localises to the golgi apparatus. The protein resides in the cell projection. The enzyme catalyses 4-hydroxy-3-(all-trans-decaprenyl)benzoate + 2 reduced [2Fe-2S]-[ferredoxin] + O2 + 2 H(+) = 3,4-dihydroxy-5-(all-trans-decaprenyl)benzoate + 2 oxidized [2Fe-2S]-[ferredoxin] + H2O. It carries out the reaction 2-methoxy-6-(all-trans-decaprenyl)phenol + 2 reduced [2Fe-2S]-[ferredoxin] + O2 + 2 H(+) = 2-methoxy-6-(all-trans-decaprenyl)benzene-1,4-diol + 2 oxidized [2Fe-2S]-[ferredoxin] + H2O. The protein operates within cofactor biosynthesis; ubiquinone biosynthesis. FAD-dependent monooxygenase required for two non-consecutive steps during ubiquinone biosynthesis. Required for the C5-ring hydroxylation during ubiquinone biosynthesis by catalyzing the hydroxylation of 4-hydroxy-3-(all-trans-decaprenyl)benzoic acid to 3,4-dihydroxy-5-(all-trans-decaprenyl)benzoic acid. Also acts downstream of COQ4, for the C1-hydroxylation during ubiquinone biosynthesis by catalyzing the hydroxylation of 2-methoxy-6-(all-trans-decaprenyl)phenol to 2-methoxy-6-(all-trans-decaprenyl)benzene-1,4-diol. The electrons required for the hydroxylation reaction are funneled indirectly to COQ6 from NADPH via a ferredoxin/ferredoxin reductase system composed of FDX2 and FDXR. This is Ubiquinone biosynthesis monooxygenase COQ6, mitochondrial from Homo sapiens (Human).